Reading from the N-terminus, the 707-residue chain is Polyribonucleotide nucleotidyltransferase (707 aa).

Positions 488 and 494 each coordinate Mg(2+). Residues 555–615 form the KH domain; sequence PIIKVTKIDP…ENVDNAIALI (61 aa). The S1 motif domain maps to 625–692; the sequence is GEILEGKITR…DLGRLQFKRV (68 aa).

This sequence belongs to the polyribonucleotide nucleotidyltransferase family. The cofactor is Mg(2+).

It is found in the cytoplasm. The catalysed reaction is RNA(n+1) + phosphate = RNA(n) + a ribonucleoside 5'-diphosphate. Functionally, involved in mRNA degradation. Catalyzes the phosphorolysis of single-stranded polyribonucleotides processively in the 3'- to 5'-direction. This chain is Polyribonucleotide nucleotidyltransferase, found in Thermotoga neapolitana (strain ATCC 49049 / DSM 4359 / NBRC 107923 / NS-E).